Here is a 540-residue protein sequence, read N- to C-terminus: Sterol 14-alpha demethylase (540 aa).

The helical transmembrane segment at 41 to 61 threads the bilayer; that stretch reads PLFLVSGFLGVCVAYAVANII. Cysteine 485 provides a ligand contact to heme.

The protein belongs to the cytochrome P450 family. Requires heme as cofactor.

It is found in the membrane. It carries out the reaction a 14alpha-methyl steroid + 3 reduced [NADPH--hemoprotein reductase] + 3 O2 = a Delta(14) steroid + formate + 3 oxidized [NADPH--hemoprotein reductase] + 4 H2O + 4 H(+). The catalysed reaction is a 14alpha-methyl steroid + reduced [NADPH--hemoprotein reductase] + O2 = a 14alpha-hydroxymethyl steroid + oxidized [NADPH--hemoprotein reductase] + H2O + H(+). The enzyme catalyses a 14alpha-hydroxymethyl steroid + reduced [NADPH--hemoprotein reductase] + O2 = a 14alpha-formyl steroid + oxidized [NADPH--hemoprotein reductase] + 2 H2O + H(+). It catalyses the reaction a 14alpha-formyl steroid + reduced [NADPH--hemoprotein reductase] + O2 = a Delta(14) steroid + formate + oxidized [NADPH--hemoprotein reductase] + H2O + 2 H(+). It carries out the reaction lanosterol + 3 reduced [NADPH--hemoprotein reductase] + 3 O2 = 4,4-dimethyl-5alpha-cholesta-8,14,24-trien-3beta-ol + formate + 3 oxidized [NADPH--hemoprotein reductase] + 4 H2O + 4 H(+). The catalysed reaction is lanosterol + reduced [NADPH--hemoprotein reductase] + O2 = 32-hydroxylanosterol + oxidized [NADPH--hemoprotein reductase] + H2O + H(+). The enzyme catalyses 32-hydroxylanosterol + reduced [NADPH--hemoprotein reductase] + O2 = 32-oxolanosterol + oxidized [NADPH--hemoprotein reductase] + 2 H2O + H(+). It catalyses the reaction 32-oxolanosterol + reduced [NADPH--hemoprotein reductase] + O2 = 4,4-dimethyl-5alpha-cholesta-8,14,24-trien-3beta-ol + formate + oxidized [NADPH--hemoprotein reductase] + H2O + 2 H(+). It carries out the reaction eburicol + 3 reduced [NADPH--hemoprotein reductase] + 3 O2 = 14-demethyleburicol + formate + 3 oxidized [NADPH--hemoprotein reductase] + 4 H2O + 4 H(+). The catalysed reaction is eburicol + reduced [NADPH--hemoprotein reductase] + O2 = 32-hydroxyeburicol + oxidized [NADPH--hemoprotein reductase] + H2O + H(+). The enzyme catalyses 32-hydroxyeburicol + reduced [NADPH--hemoprotein reductase] + O2 = 32-oxoeburicol + oxidized [NADPH--hemoprotein reductase] + 2 H2O + H(+). It catalyses the reaction 32-oxoeburicol + reduced [NADPH--hemoprotein reductase] + O2 = 14-demethyleburicol + formate + oxidized [NADPH--hemoprotein reductase] + H2O + 2 H(+). It functions in the pathway steroid biosynthesis; sterol biosynthesis. Functionally, sterol 14-alpha demethylase; part of the gene cluster that mediates the biosynthesis of tetrahydropyranyl antifungal agent lanomycin that acts as an inhibitor of CYP51 and blocks the ergosterol biosynthesis. Sterol 14-alpha-demethylase plays a critical role in the biosynthesis of ergosterol, the major sterol component in fungal membranes that participates in a variety of functions. Acts as a self-resistant CYP51 that contains mutations found in CYP51s isolated from azole resistance strains and that is not inhibited by the final product of the cluster, lanomycin. In Pyrenophora dematioidea (Helminthosporium dematioideum), this protein is Sterol 14-alpha demethylase.